We begin with the raw amino-acid sequence, 92 residues long: Acylphosphatase (92 aa).

The 88-residue stretch at 5–92 folds into the Acylphosphatase-like domain; the sequence is ATAAYVYGVV…TDYKGFTIRY (88 aa). Active-site residues include Arg20 and Asn38.

Belongs to the acylphosphatase family.

It catalyses the reaction an acyl phosphate + H2O = a carboxylate + phosphate + H(+). The protein is Acylphosphatase (acyP) of Pectobacterium atrosepticum (strain SCRI 1043 / ATCC BAA-672) (Erwinia carotovora subsp. atroseptica).